The chain runs to 596 residues: Elongation factor 4 (596 aa).

In terms of domain architecture, tr-type G spans 2–184 (KHIRNFSIIA…VIVAQIPPPE (183 aa)). GTP contacts are provided by residues 14-19 (DHGKST) and 131-134 (NKID).

It belongs to the TRAFAC class translation factor GTPase superfamily. Classic translation factor GTPase family. LepA subfamily.

The protein localises to the cell inner membrane. It catalyses the reaction GTP + H2O = GDP + phosphate + H(+). Functionally, required for accurate and efficient protein synthesis under certain stress conditions. May act as a fidelity factor of the translation reaction, by catalyzing a one-codon backward translocation of tRNAs on improperly translocated ribosomes. Back-translocation proceeds from a post-translocation (POST) complex to a pre-translocation (PRE) complex, thus giving elongation factor G a second chance to translocate the tRNAs correctly. Binds to ribosomes in a GTP-dependent manner. This Shewanella halifaxensis (strain HAW-EB4) protein is Elongation factor 4.